Consider the following 508-residue polypeptide: Early growth response protein 1 (508 aa).

Disordered stretches follow at residues 18 to 78 and 136 to 210; these read PQFL…ESFS and MTNP…QYPP. Low complexity predominate over residues 33–42; sequence NNSSSSSSSS. The span at 43–52 shows a compositional bias: gly residues; sequence SGGGGGGGSN. Residues 139 to 164 are compositionally biased toward low complexity; the sequence is PPTSSSSAPSPAASSSSSASQSPPLS. Lys-278 participates in a covalent cross-link: Glycyl lysine isopeptide (Lys-Gly) (interchain with G-Cter in SUMO2). The segment at 292–311 is disordered; sequence SRMRKYPNRPSKTPPHERPY. C2H2-type zinc fingers lie at residues 311–335, 341–363, and 369–391; these read YACP…IRIH, FQCR…IRTH, and FACD…TKIH. A disordered region spans residues 382 to 453; that stretch reads DERKRHTKIH…SSTYPSPAHS (72 aa). Residues 386–396 are compositionally biased toward basic residues; it reads RHTKIHLRQKD. Over residues 402 to 450 the composition is skewed to low complexity; that stretch reads SVVASSAASSLSSYPSPVATSYPSPATTSFPSPVPTSYSSPGSSTYPSP. 7 tandem repeats follow at residues 413-420, 421-428, 429-436, 437-444, 445-452, 453-460, and 462-468. A 7 X 8 AA tandem repeats of [TS](2)-[FY]-[PS]-S-P-[GSAV]-X region spans residues 413-468; the sequence is SSYPSPVATSYPSPATTSFPSPVPTSYSSPGSSTYPSPAHSGFPSPSVATTYASVP.

It belongs to the EGR C2H2-type zinc-finger protein family. In terms of assembly, interacts with SNAI1 and SP1 upon 12-O-tetradecanoylphorbol-13-acetate (TPA) induction. In terms of tissue distribution, detected in kidney thick ascending limbs and collecting ducts (at protein level).

It is found in the nucleus. The protein localises to the cytoplasm. Transcriptional regulator. Recognizes and binds to the DNA sequence 5'-GCG(T/G)GGGCG-3'(EGR-site) in the promoter region of target genes. Binds double-stranded target DNA, irrespective of the cytosine methylation status. Regulates the transcription of numerous target genes, and thereby plays an important role in regulating the response to growth factors, DNA damage, and ischemia. Plays a role in the regulation of cell survival, proliferation and cell death. Activates expression of p53/TP53 and TGFB1, and thereby helps prevent tumor formation. Required for normal progress through mitosis and normal proliferation of hepatocytes after partial hepatectomy. Mediates responses to ischemia and hypoxia; regulates the expression of proteins such as IL1B and CXCL2 that are involved in inflammatory processes and development of tissue damage after ischemia. Regulates biosynthesis of luteinizing hormone (LHB) in the pituitary. Regulates the amplitude of the expression rhythms of clock genes: BMAL1, PER2 and NR1D1 in the liver via the activation of PER1 (clock repressor) transcription. Regulates the rhythmic expression of core-clock gene BMAL1 in the suprachiasmatic nucleus (SCN). Regulates biosynthesis of glucocorticoid receptor GR/NR3C1 in the hippocampus and thereby may play a role in the behavioral and hypothalamic-pituitary-adrenal responses to stress in offspring. The chain is Early growth response protein 1 (Egr1) from Rattus norvegicus (Rat).